We begin with the raw amino-acid sequence, 459 residues long: Cysteine--tRNA ligase (459 aa).

Cys-31 is a binding site for Zn(2+). Residues 33 to 43 (PTVYYNPHIGN) carry the 'HIGH' region motif. Zn(2+)-binding residues include Cys-216, His-241, and Glu-245. The 'KMSKS' region motif lies at 274–278 (KMSKS). Residue Lys-277 coordinates ATP.

The protein belongs to the class-I aminoacyl-tRNA synthetase family. In terms of assembly, monomer. The cofactor is Zn(2+).

It localises to the cytoplasm. The enzyme catalyses tRNA(Cys) + L-cysteine + ATP = L-cysteinyl-tRNA(Cys) + AMP + diphosphate. The polypeptide is Cysteine--tRNA ligase (Rickettsia africae (strain ESF-5)).